The sequence spans 241 residues: L-aspartate dehydrogenase (241 aa).

NAD(+) is bound by residues 10 to 11 (NI), aspartate 28, 56 to 57 (AS), 63 to 64 (EY), 78 to 79 (IS), alanine 109, and asparagine 164. Residue histidine 193 is part of the active site.

The protein belongs to the L-aspartate dehydrogenase family. Homodimer.

It catalyses the reaction L-aspartate + NADP(+) + H2O = oxaloacetate + NH4(+) + NADPH + H(+). The catalysed reaction is L-aspartate + NAD(+) + H2O = oxaloacetate + NH4(+) + NADH + H(+). It participates in cofactor biosynthesis; NAD(+) biosynthesis; iminoaspartate from L-aspartate (dehydrogenase route): step 1/1. Competitively inhibited by L-malate and NH(4)(+). Specifically catalyzes the NAD or NADP-dependent dehydrogenation of L-aspartate to iminoaspartate. Does not show aspartate oxidase activity. Is also able to catalyze the reverse reaction, i.e. the reductive amination of oxaloacetate. This Thermotoga maritima (strain ATCC 43589 / DSM 3109 / JCM 10099 / NBRC 100826 / MSB8) protein is L-aspartate dehydrogenase.